The chain runs to 332 residues: BRISC and BRCA1-A complex member 1 (332 aa).

Met1 bears the N-acetylmethionine mark. Residues 1–88 are disordered; that stretch reads MEVAEPSCPT…PPPAPEVQVR (88 aa). A compositionally biased stretch (acidic residues) spans 10–23; sequence TEEEEEEEEEEEQS. Phosphoserine occurs at positions 32, 52, and 60. The span at 70 to 83 shows a compositional bias: pro residues; that stretch reads GAGPKPWQVPPPAP. Residues 98-301 are VWFA-like; it reads VIICLDLSEE…LELHNCMAKL (204 aa).

It belongs to the BABAM1 family. As to quaternary structure, component of the ARISC complex, at least composed of UIMC1/RAP80, ABRAXAS1, BRCC3/BRCC36, BABAM2 and BABAM1/NBA1. Component of the BRCA1-A complex, at least composed of BRCA1, BARD1, UIMC1/RAP80, ABRAXAS1, BRCC3/BRCC36, BABAM2 and BABAM1/NBA1. In the BRCA1-A complex, interacts directly with ABRAXAS1 and BABAM2. Component of the BRISC complex, at least composed of ABRAXAS2, BRCC3/BRCC36, BABAM2 and BABAM1/NBA1. Identified in a complex with SHMT2 and the other subunits of the BRISC complex.

The protein resides in the cytoplasm. It is found in the nucleus. In terms of biological role, component of the BRCA1-A complex, a complex that specifically recognizes 'Lys-63'-linked ubiquitinated histones H2A and H2AX at DNA lesions sites, leading to target the BRCA1-BARD1 heterodimer to sites of DNA damage at double-strand breaks (DSBs). The BRCA1-A complex also possesses deubiquitinase activity that specifically removes 'Lys-63'-linked ubiquitin on histones H2A and H2AX. In the BRCA1-A complex, it is required for the complex integrity and its localization at DSBs. Component of the BRISC complex, a multiprotein complex that specifically cleaves 'Lys-63'-linked ubiquitin in various substrates. In these 2 complexes, it is probably required to maintain the stability of BABAM2 and help the 'Lys-63'-linked deubiquitinase activity mediated by BRCC3/BRCC36 component. The BRISC complex is required for normal mitotic spindle assembly and microtubule attachment to kinetochores via its role in deubiquitinating NUMA1. Plays a role in interferon signaling via its role in the deubiquitination of the interferon receptor IFNAR1; deubiquitination increases IFNAR1 activity by enhancing its stability and cell surface expression. Down-regulates the response to bacterial lipopolysaccharide (LPS) via its role in IFNAR1 deubiquitination. The sequence is that of BRISC and BRCA1-A complex member 1 (BABAM1) from Bos taurus (Bovine).